The chain runs to 92 residues: C-C motif chemokine 3 (92 aa).

Residues 1–23 form the signal peptide; the sequence is MQVSTAALAVLLCTMALCNQFSA. Disulfide bonds link Cys33–Cys57 and Cys34–Cys73.

Belongs to the intercrine beta (chemokine CC) family. In terms of assembly, self-associates. Also heterodimer of MIP-1-alpha(4-69) and MIP-1-beta(3-69). Interacts with CCR1. In terms of processing, N-terminal processed form LD78-alpha(4-69) is produced by proteolytic cleavage after secretion from HTLV1-transformed T-cells.

It localises to the secreted. Monokine with inflammatory and chemokinetic properties. Binds to CCR1, CCR4 and CCR5. One of the major HIV-suppressive factors produced by CD8+ T-cells. Recombinant MIP-1-alpha induces a dose-dependent inhibition of different strains of HIV-1, HIV-2, and simian immunodeficiency virus (SIV). The polypeptide is C-C motif chemokine 3 (CCL3) (Homo sapiens (Human)).